The chain runs to 529 residues: Peptide chain release factor 3 (529 aa).

Residues 11 to 280 (AKRRTFAIIS…GLIEWAPQPM (270 aa)) form the tr-type G domain. GTP contacts are provided by residues 20–27 (SHPDAGKT), 88–92 (DTPGH), and 142–145 (NKLD).

This sequence belongs to the TRAFAC class translation factor GTPase superfamily. Classic translation factor GTPase family. PrfC subfamily.

The protein localises to the cytoplasm. Its function is as follows. Increases the formation of ribosomal termination complexes and stimulates activities of RF-1 and RF-2. It binds guanine nucleotides and has strong preference for UGA stop codons. It may interact directly with the ribosome. The stimulation of RF-1 and RF-2 is significantly reduced by GTP and GDP, but not by GMP. The sequence is that of Peptide chain release factor 3 from Enterobacter sp. (strain 638).